A 270-amino-acid chain; its full sequence is 4-diphosphocytidyl-2-C-methyl-D-erythritol kinase (270 aa).

Residue lysine 8 is part of the active site. 90 to 100 (PIGAGLGGGSS) serves as a coordination point for ATP. Residue aspartate 132 is part of the active site.

It belongs to the GHMP kinase family. IspE subfamily.

The enzyme catalyses 4-CDP-2-C-methyl-D-erythritol + ATP = 4-CDP-2-C-methyl-D-erythritol 2-phosphate + ADP + H(+). It participates in isoprenoid biosynthesis; isopentenyl diphosphate biosynthesis via DXP pathway; isopentenyl diphosphate from 1-deoxy-D-xylulose 5-phosphate: step 3/6. Its function is as follows. Catalyzes the phosphorylation of the position 2 hydroxy group of 4-diphosphocytidyl-2C-methyl-D-erythritol. The protein is 4-diphosphocytidyl-2-C-methyl-D-erythritol kinase of Cytophaga hutchinsonii (strain ATCC 33406 / DSM 1761 / CIP 103989 / NBRC 15051 / NCIMB 9469 / D465).